Here is a 298-residue protein sequence, read N- to C-terminus: UDP-N-acetylenolpyruvoylglucosamine reductase (298 aa).

The FAD-binding PCMH-type domain occupies lysine 26–glutamate 191. Arginine 170 is an active-site residue. Catalysis depends on serine 220, which acts as the Proton donor. The active site involves glutamate 290.

This sequence belongs to the MurB family. FAD serves as cofactor.

The protein resides in the cytoplasm. The catalysed reaction is UDP-N-acetyl-alpha-D-muramate + NADP(+) = UDP-N-acetyl-3-O-(1-carboxyvinyl)-alpha-D-glucosamine + NADPH + H(+). The protein operates within cell wall biogenesis; peptidoglycan biosynthesis. Its function is as follows. Cell wall formation. In Listeria monocytogenes serotype 4b (strain CLIP80459), this protein is UDP-N-acetylenolpyruvoylglucosamine reductase.